The primary structure comprises 80 residues: Toxin Acra1 (80 aa).

Positions 1 to 22 are cleaved as a signal peptide; that stretch reads MMKLVLFSIIVILFSLIGSIHG. The 56-residue stretch at 25–80 folds into the LCN-type CS-alpha/beta domain; it reads VPGNYPLDSSGNKYPCTVLGDNQSCIDVCKKHGVKYGYCYSFKCWCEFLEDKNVSI. Disulfide bonds link Cys40-Cys63, Cys49-Cys68, and Cys53-Cys70.

As to expression, expressed by the venom gland.

The protein localises to the secreted. Functionally, probable neurotoxin that inhibits ion channels. Is toxic to mice. Is about 2.8% of the total protein in the venom. This is Toxin Acra1 from Androctonus crassicauda (Arabian fat-tailed scorpion).